The following is a 718-amino-acid chain: DNA ligase (718 aa).

NAD(+) contacts are provided by residues 44–48 (DADYD), 93–94 (SL), and glutamate 127. Lysine 129 functions as the N6-AMP-lysine intermediate in the catalytic mechanism. The NAD(+) site is built by arginine 150, glutamate 186, lysine 302, and lysine 326. Residues cysteine 432, cysteine 435, cysteine 456, and cysteine 462 each coordinate Zn(2+). The 79-residue stretch at 640-718 (TAGSPVAGKT…EDQWLALISG (79 aa)) folds into the BRCT domain.

Belongs to the NAD-dependent DNA ligase family. LigA subfamily. Mg(2+) serves as cofactor. Mn(2+) is required as a cofactor.

The catalysed reaction is NAD(+) + (deoxyribonucleotide)n-3'-hydroxyl + 5'-phospho-(deoxyribonucleotide)m = (deoxyribonucleotide)n+m + AMP + beta-nicotinamide D-nucleotide.. In terms of biological role, DNA ligase that catalyzes the formation of phosphodiester linkages between 5'-phosphoryl and 3'-hydroxyl groups in double-stranded DNA using NAD as a coenzyme and as the energy source for the reaction. It is essential for DNA replication and repair of damaged DNA. The chain is DNA ligase from Rhizobium johnstonii (strain DSM 114642 / LMG 32736 / 3841) (Rhizobium leguminosarum bv. viciae).